The following is a 284-amino-acid chain: 4-hydroxybenzoate octaprenyltransferase (284 aa).

8 helical membrane passes run 18-38, 42-62, 93-113, 136-156, 161-181, 209-229, 233-253, and 264-284; these read PIGTLLLLWPTLWALIIAAEG, WHVLLVFVLGVVLMRSAGCVI, IILFLLLGISSFLLVLTMNPL, HLPQLFLGLAFSWAIPMAWAA, LPWVVWFVFAINALWTIAYDT, LIIGLLQLLTLVMLVWLGLHY, QSFYWSVLAAGALFVYQQHLI, and AFLNNNYVGMVLALGLFVAFW.

It belongs to the UbiA prenyltransferase family. Mg(2+) is required as a cofactor.

Its subcellular location is the cell inner membrane. The enzyme catalyses all-trans-octaprenyl diphosphate + 4-hydroxybenzoate = 4-hydroxy-3-(all-trans-octaprenyl)benzoate + diphosphate. Its pathway is cofactor biosynthesis; ubiquinone biosynthesis. Functionally, catalyzes the prenylation of para-hydroxybenzoate (PHB) with an all-trans polyprenyl group. Mediates the second step in the final reaction sequence of ubiquinone-8 (UQ-8) biosynthesis, which is the condensation of the polyisoprenoid side chain with PHB, generating the first membrane-bound Q intermediate 3-octaprenyl-4-hydroxybenzoate. The sequence is that of 4-hydroxybenzoate octaprenyltransferase from Vibrio vulnificus (strain CMCP6).